Consider the following 434-residue polypeptide: Beta-enolase (434 aa).

A2 carries the N-acetylalanine modification. T72 carries the post-translational modification Phosphothreonine. S83 and S157 each carry phosphoserine. 2 residues coordinate substrate: H158 and E167. A Phosphoserine modification is found at S176. T205 is modified (phosphothreonine). Catalysis depends on E210, which acts as the Proton donor. At T229 the chain carries Phosphothreonine. Phosphotyrosine is present on Y236. Residue D245 coordinates Mg(2+). Residue S263 is modified to Phosphoserine. E293 and D318 together coordinate substrate. E293 and D318 together coordinate Mg(2+). K343 serves as the catalytic Proton acceptor. Substrate contacts are provided by residues 370 to 373 and K394; that span reads SHRS.

Belongs to the enolase family. In terms of assembly, mammalian enolase is composed of 3 isozyme subunits, alpha, beta and gamma, which can form homodimers or heterodimers which are cell-type and development-specific. Interacts with PNKD. Mg(2+) is required as a cofactor. The alpha/alpha homodimer is expressed in embryo and in most adult tissues. The alpha/beta heterodimer and the beta/beta homodimer are found in striated muscle, and the alpha/gamma heterodimer and the gamma/gamma homodimer in neurons.

Its subcellular location is the cytoplasm. It carries out the reaction (2R)-2-phosphoglycerate = phosphoenolpyruvate + H2O. It functions in the pathway carbohydrate degradation; glycolysis; pyruvate from D-glyceraldehyde 3-phosphate: step 4/5. In terms of biological role, glycolytic enzyme that catalyzes the conversion of 2-phosphoglycerate to phosphoenolpyruvate. Appears to have a function in striated muscle development and regeneration. In Oryctolagus cuniculus (Rabbit), this protein is Beta-enolase (ENO3).